The sequence spans 360 residues: C-C chemokine receptor-like 2 (360 aa).

Over 1-42 the chain is Extracellular; the sequence is MDNYTVAPDDEYDVLILDDYLDNSGPDQVPAPEFLSPQQVLQ. The N-linked (GlcNAc...) asparagine glycan is linked to N3. The helical transmembrane segment at 43–63 threads the bilayer; the sequence is FCCAVFAVGLLDNVLAVFILV. The Cytoplasmic segment spans residues 64 to 73; sequence KYKGLKNLGN. Residues 74–94 form a helical membrane-spanning segment; sequence IYFLNLALSNLCFLLPLPFWA. The Extracellular segment spans residues 95–109; sequence HTAAHGESPGNGTCK. Residue N105 is glycosylated (N-linked (GlcNAc...) asparagine). A disulfide bridge connects residues C108 and C185. The chain crosses the membrane as a helical span at residues 110–130; it reads VLVGLHSSGLYSEVFSNILLL. The Cytoplasmic portion of the chain corresponds to 131 to 141; that stretch reads VQGYRVFSQGR. The chain crosses the membrane as a helical span at residues 142-162; that stretch reads LASIFTTVSCGIVACILAWAM. Topologically, residues 163-202 are extracellular; the sequence is ATALSLPESVFYEPRMERQKHKCAFGKPHFLPIEAPLWKY. A helical membrane pass occupies residues 203–223; it reads VLTSKMIILVLAFPLLVFIIC. The Cytoplasmic segment spans residues 224–243; that stretch reads CRQLRRRQSFRERQYDLHKP. The helical transmembrane segment at 244–264 threads the bilayer; the sequence is ALVITGVFLLMWAPYNTVLFL. The Extracellular segment spans residues 265 to 285; sequence SAFQEHLSLQDEKSSYHLDAS. A helical membrane pass occupies residues 286-307; sequence VQVTQLVATTHCCVNPLLYLLL. The Cytoplasmic segment spans residues 308 to 360; sequence DRKAFMRYLRSLFPRCNDIPYQSSGGYQQAPPREGHGRPIELYSNLHQRQDII.

Belongs to the G-protein coupled receptor 1 family. Expressed in macrophages, astrocytes, in glial cells. Constitutively expressed by mast cells. Detected in bronchial epithelium in OVA-induced airway inflammation. Up-regulated during dendritic cell (DC) maturation.

Its subcellular location is the cell membrane. In terms of biological role, receptor for CCL19 and chemerin/RARRES2. Does not appear to be a signaling receptor, but may have a role in modulating chemokine-triggered immune responses by capturing and internalizing CCL19 or by presenting RARRES2 ligand to CMKLR1, a functional signaling receptor. Plays a critical role for the development of Th2 responses. In Mus musculus (Mouse), this protein is C-C chemokine receptor-like 2 (Ccrl2).